Here is a 215-residue protein sequence, read N- to C-terminus: Ribonuclease T (215 aa).

Positions 20-194 (VVIDVETAGF…YDTERTAVLF (175 aa)) constitute an Exonuclease domain. Mg(2+) contacts are provided by Asp23, Glu25, His181, and Asp186. His181 acts as the Proton donor/acceptor in catalysis.

The protein belongs to the RNase T family. Homodimer. Mg(2+) is required as a cofactor.

In terms of biological role, trims short 3' overhangs of a variety of RNA species, leaving a one or two nucleotide 3' overhang. Responsible for the end-turnover of tRNA: specifically removes the terminal AMP residue from uncharged tRNA (tRNA-C-C-A). Also appears to be involved in tRNA biosynthesis, especially in strains lacking other exoribonucleases. Functionally, a general regulator of small RNAs (sRNA), contributes to their degradation. Upon overexpression suppresses sRNA-mediated RhyB-silencing of multiple RNA targets; overexpression leads to nearly complete loss of RhyB sRNA. In Escherichia coli (strain K12), this protein is Ribonuclease T.